Here is a 255-residue protein sequence, read N- to C-terminus: MQVILAVIVWMASSVSSSSFTASTLPDITNEDFIKECVQVHNQLRSKVSPPARNMLYMSWDPKLAQIAKAWTKSCEFKHNPQLHSRIHPNFTALGENIWLGSLSIFSVSSAISAWYEEIKHYDFSTRKCRHVCGHYTQVVWADSYKLGCAVQLCPNGANFICDYGPAGNYPTWPYKQGATCSDCPKDDKCLNSLCINPRRDQVSRYYSVDYPDWPIYLRNRYTSLFLIAKSVLLLLSVIITIWVKHKYPNLVLLD.

The first 17 residues, 1-17, serve as a signal peptide directing secretion; it reads MQVILAVIVWMASSVSS. In terms of domain architecture, SCP spans 39–164; it reads QVHNQLRSKV…PNGANFICDY (126 aa). Residues 224 to 244 form a helical membrane-spanning segment; that stretch reads SLFLIAKSVLLLLSVIITIWV.

This sequence belongs to the CRISP family.

The protein localises to the membrane. This Mus musculus (Mouse) protein is Glioma pathogenesis-related protein 1 (Glipr1).